A 602-amino-acid chain; its full sequence is Threonine--tRNA ligase (602 aa).

Positions 208 to 499 (DHRKLGIELK…LTEHCAGEFP (292 aa)) are catalytic. Positions 300, 351, and 476 each coordinate Zn(2+).

This sequence belongs to the class-II aminoacyl-tRNA synthetase family. In terms of assembly, homodimer. Zn(2+) serves as cofactor.

It is found in the cytoplasm. It catalyses the reaction tRNA(Thr) + L-threonine + ATP = L-threonyl-tRNA(Thr) + AMP + diphosphate + H(+). Catalyzes the attachment of threonine to tRNA(Thr) in a two-step reaction: L-threonine is first activated by ATP to form Thr-AMP and then transferred to the acceptor end of tRNA(Thr). Also edits incorrectly charged L-seryl-tRNA(Thr). This Campylobacter jejuni subsp. doylei (strain ATCC BAA-1458 / RM4099 / 269.97) protein is Threonine--tRNA ligase.